The sequence spans 469 residues: Neuraminidase (469 aa).

The Intravirion portion of the chain corresponds to 1 to 6 (MNPNQK). The chain crosses the membrane as a helical span at residues 7–27 (LFASSGIAIALGIINLLIGIS). An involved in apical transport and lipid raft association region spans residues 11-33 (SGIAIALGIINLLIGISNMSLNI). 8 N-linked (GlcNAc...) asparagine; by host glycosylation sites follow: Asn28, Asn32, Asn46, Asn55, Asn56, Asn65, Asn66, and Asn85. Topologically, residues 28 to 469 (NMSLNISLYS…PDGAQIKYFS (442 aa)) are virion surface. Residues 36 to 85 (YSKGENHKSDNLTCTNINQNNTTMVNTYINNTTIIDKNTKMENPGYLLLN) are hypervariable stalk region. The head of neuraminidase stretch occupies residues 88–469 (LCNVEGWVVI…PDGAQIKYFS (382 aa)). 8 disulfide bridges follow: Cys89-Cys417, Cys121-Cys126, Cys181-Cys228, Cys230-Cys235, Cys276-Cys289, Cys278-Cys287, Cys316-Cys334, and Cys421-Cys448. Arg115 contacts substrate. Asn143 carries N-linked (GlcNAc...) asparagine; by host glycosylation. The active-site Proton donor/acceptor is the Asp148. Arg149 contributes to the substrate binding site. Residues Asn198 and Asn232 are each glycosylated (N-linked (GlcNAc...) asparagine; by host). 274–275 (EE) contacts substrate. Substrate is bound at residue Arg290. The Ca(2+) site is built by Asp291, Gly295, and Asp322. Asn356 carries an N-linked (GlcNAc...) asparagine; by host glycan. Residue Arg369 participates in substrate binding. Asn399 is a glycosylation site (N-linked (GlcNAc...) asparagine; by host). Tyr403 serves as the catalytic Nucleophile.

It belongs to the glycosyl hydrolase 34 family. Homotetramer. Ca(2+) is required as a cofactor. In terms of processing, N-glycosylated.

Its subcellular location is the virion membrane. The protein resides in the host apical cell membrane. The catalysed reaction is Hydrolysis of alpha-(2-&gt;3)-, alpha-(2-&gt;6)-, alpha-(2-&gt;8)- glycosidic linkages of terminal sialic acid residues in oligosaccharides, glycoproteins, glycolipids, colominic acid and synthetic substrates.. Inhibited by the neuraminidase inhibitors zanamivir (Relenza) and oseltamivir (Tamiflu). These drugs interfere with the release of progeny virus from infected cells and are effective against all influenza strains. Resistance to neuraminidase inhibitors is quite rare. Catalyzes the removal of terminal sialic acid residues from viral and cellular glycoconjugates. Cleaves off the terminal sialic acids on the glycosylated HA during virus budding to facilitate virus release. Additionally helps virus spread through the circulation by further removing sialic acids from the cell surface. These cleavages prevent self-aggregation and ensure the efficient spread of the progeny virus from cell to cell. Otherwise, infection would be limited to one round of replication. Described as a receptor-destroying enzyme because it cleaves a terminal sialic acid from the cellular receptors. May facilitate viral invasion of the upper airways by cleaving the sialic acid moieties on the mucin of the airway epithelial cells. Likely to plays a role in the budding process through its association with lipid rafts during intracellular transport. May additionally display a raft-association independent effect on budding. Plays a role in the determination of host range restriction on replication and virulence. Sialidase activity in late endosome/lysosome traffic seems to enhance virus replication. This Influenza A virus (strain A/Equine/Prague/1/1956 H7N7) protein is Neuraminidase.